Here is a 274-residue protein sequence, read N- to C-terminus: Thymidylate synthase (274 aa).

Arg-21 lines the dUMP pocket. His-51 contacts (6R)-5,10-methylene-5,6,7,8-tetrahydrofolate. DUMP is bound at residue 123-124 (RR). Cys-156 (nucleophile) is an active-site residue. DUMP-binding positions include 176 to 179 (RSAD), Asn-187, and 217 to 219 (HIY). Asp-179 is a (6R)-5,10-methylene-5,6,7,8-tetrahydrofolate binding site. Ala-273 lines the (6R)-5,10-methylene-5,6,7,8-tetrahydrofolate pocket.

This sequence belongs to the thymidylate synthase family. Bacterial-type ThyA subfamily. As to quaternary structure, homodimer.

Its subcellular location is the cytoplasm. The enzyme catalyses dUMP + (6R)-5,10-methylene-5,6,7,8-tetrahydrofolate = 7,8-dihydrofolate + dTMP. It functions in the pathway pyrimidine metabolism; dTTP biosynthesis. Catalyzes the reductive methylation of 2'-deoxyuridine-5'-monophosphate (dUMP) to 2'-deoxythymidine-5'-monophosphate (dTMP) while utilizing 5,10-methylenetetrahydrofolate (mTHF) as the methyl donor and reductant in the reaction, yielding dihydrofolate (DHF) as a by-product. This enzymatic reaction provides an intracellular de novo source of dTMP, an essential precursor for DNA biosynthesis. This is Thymidylate synthase from Flavobacterium psychrophilum (strain ATCC 49511 / DSM 21280 / CIP 103535 / JIP02/86).